The following is a 456-amino-acid chain: Ribulose bisphosphate carboxylase large chain (456 aa).

Lys-7 is modified (N6,N6,N6-trimethyllysine). Positions 116 and 166 each coordinate substrate. The active-site Proton acceptor is the Lys-168. Lys-170 contributes to the substrate binding site. Mg(2+) contacts are provided by Lys-194, Asp-196, and Glu-197. The residue at position 194 (Lys-194) is an N6-carboxylysine. The Proton acceptor role is filled by His-287. Positions 288, 320, and 372 each coordinate substrate.

It belongs to the RuBisCO large chain family. Type I subfamily. In terms of assembly, heterohexadecamer of 8 large chains and 8 small chains; disulfide-linked. The disulfide link is formed within the large subunit homodimers. It depends on Mg(2+) as a cofactor. Post-translationally, the disulfide bond which can form in the large chain dimeric partners within the hexadecamer appears to be associated with oxidative stress and protein turnover.

The protein localises to the plastid. The protein resides in the chloroplast. It carries out the reaction 2 (2R)-3-phosphoglycerate + 2 H(+) = D-ribulose 1,5-bisphosphate + CO2 + H2O. The enzyme catalyses D-ribulose 1,5-bisphosphate + O2 = 2-phosphoglycolate + (2R)-3-phosphoglycerate + 2 H(+). Its function is as follows. RuBisCO catalyzes two reactions: the carboxylation of D-ribulose 1,5-bisphosphate, the primary event in carbon dioxide fixation, as well as the oxidative fragmentation of the pentose substrate in the photorespiration process. Both reactions occur simultaneously and in competition at the same active site. The protein is Ribulose bisphosphate carboxylase large chain of Barnardia japonica (Chinese squill).